Here is a 126-residue protein sequence, read N- to C-terminus: MFS14 protein (126 aa).

Residues 1–23 constitute a signal peptide (or 24, or 26); sequence MALEAATAPRALLAACLVLLVLG.

As to expression, enhanced expression in male flowers. Accumulates in the tapetum.

The sequence is that of MFS14 protein (MFS14) from Zea mays (Maize).